The primary structure comprises 141 residues: Large ribosomal subunit protein uL11 (141 aa).

It belongs to the universal ribosomal protein uL11 family. In terms of assembly, part of the ribosomal stalk of the 50S ribosomal subunit. Interacts with L10 and the large rRNA to form the base of the stalk. L10 forms an elongated spine to which L12 dimers bind in a sequential fashion forming a multimeric L10(L12)X complex. In terms of processing, one or more lysine residues are methylated.

Forms part of the ribosomal stalk which helps the ribosome interact with GTP-bound translation factors. The protein is Large ribosomal subunit protein uL11 of Prochlorococcus marinus (strain NATL1A).